The primary structure comprises 110 residues: DNA-directed RNA polymerase subunit omega (110 aa).

It belongs to the RNA polymerase subunit omega family. As to quaternary structure, the RNAP catalytic core consists of 2 alpha, 1 beta, 1 beta' and 1 omega subunit. When a sigma factor is associated with the core the holoenzyme is formed, which can initiate transcription.

It carries out the reaction RNA(n) + a ribonucleoside 5'-triphosphate = RNA(n+1) + diphosphate. In terms of biological role, promotes RNA polymerase assembly. Latches the N- and C-terminal regions of the beta' subunit thereby facilitating its interaction with the beta and alpha subunits. The sequence is that of DNA-directed RNA polymerase subunit omega (rpoZ) from Mycobacterium bovis (strain ATCC BAA-935 / AF2122/97).